A 342-amino-acid polypeptide reads, in one-letter code: Inactive chitinase-like protein 2 (342 aa).

The signal sequence occupies residues 1–19 (MKEIVRALEGYGPPKDKAA). In terms of domain architecture, Chitin-binding type-1 spans 20 to 60 (EQCGWQAGGALCPGGLCCSQYGWCANTPEYCGSGCQSQCDG). Cystine bridges form between C22-C37, C31-C43, C36-C80, C84-C88, C122-C184, C196-C204, and C301-C333.

The protein belongs to the glycosyl hydrolase 19 family. Chitinase class I subfamily.

Its function is as follows. Inactive chitinase-like protein that does not exhibit hydrolytic activity toward chitin. Binds strongly to chitin and possesses antifungal activity toward the fungal pathogen Altenaria alternata in plate assays. Probably involved in defense against fungal pathogens through a mechanism that only involves carbohydrate binding. The protein is Inactive chitinase-like protein 2 of Hevea brasiliensis (Para rubber tree).